The sequence spans 229 residues: Potassium/proton antiporter CemA (229 aa).

Transmembrane regions (helical) follow at residues 7-27 (FIPFLYLISIVFLPWWIYLSF), 106-126 (MILHFSTNLICFLILGGYSIL), 154-174 (ILLVTDLCIGFHSPQGWELLI), and 189-209 (IISSLVSTFPVILDTILKYWI).

It belongs to the CemA family.

The protein localises to the plastid. It localises to the chloroplast inner membrane. It catalyses the reaction K(+)(in) + H(+)(out) = K(+)(out) + H(+)(in). In terms of biological role, contributes to K(+)/H(+) antiport activity by supporting proton efflux to control proton extrusion and homeostasis in chloroplasts in a light-dependent manner to modulate photosynthesis. Prevents excessive induction of non-photochemical quenching (NPQ) under continuous-light conditions. Indirectly promotes efficient inorganic carbon uptake into chloroplasts. In Spinacia oleracea (Spinach), this protein is Potassium/proton antiporter CemA.